A 506-amino-acid polypeptide reads, in one-letter code: GMP synthase [glutamine-hydrolyzing] (506 aa).

A Glutamine amidotransferase type-1 domain is found at 3–188 (GFVILDFGSQ…AQGMCKAPAD (186 aa)). C80 serves as the catalytic Nucleophile. Catalysis depends on residues H162 and E164. A GMPS ATP-PPase domain is found at 189-381 (WDAPHIKDIL…LGLPKEMLWR (193 aa)). 217–223 (SGGVDST) lines the ATP pocket.

Homodimer.

The enzyme catalyses XMP + L-glutamine + ATP + H2O = GMP + L-glutamate + AMP + diphosphate + 2 H(+). The protein operates within purine metabolism; GMP biosynthesis; GMP from XMP (L-Gln route): step 1/1. Its function is as follows. Catalyzes the synthesis of GMP from XMP. In Bdellovibrio bacteriovorus (strain ATCC 15356 / DSM 50701 / NCIMB 9529 / HD100), this protein is GMP synthase [glutamine-hydrolyzing].